The primary structure comprises 537 residues: Probable E3 ubiquitin-protein ligase ARI3 (537 aa).

The tract at residues 1–30 (MDDDYMMLDDDYGEEEDENYSEDDNYSEAE) is disordered. The TRIAD supradomain stretch occupies residues 117-331 (KTMKCDVCME…IAGHSCGRYK (215 aa)). C121, C124, C139, H141, C144, C147, C166, C171, C210, C216, C234, C236, C241, C244, H249, C254, C281, and C284 together coordinate Zn(2+). The RING-type 1 zinc-finger motif lies at 121 to 171 (CDVCMEDDLPSNVMTRMECGHRFCNDCWIGHFTVKINEGESKRILCMAHEC). An IBR-type zinc finger spans residues 190 to 254 (DRYDRFLIES…LSESHSPCSC (65 aa)). The segment at 281 to 309 (CPKCSKPIQKRDGCNLMTCKCGQHFCWLC) adopts an RING-type 2; atypical zinc-finger fold. C294 is an active-site residue. Zn(2+) contacts are provided by C299, C301, C306, C309, H317, and C327.

This sequence belongs to the RBR family. Ariadne subfamily. It depends on Zn(2+) as a cofactor. In terms of tissue distribution, ubiquitous.

The enzyme catalyses [E2 ubiquitin-conjugating enzyme]-S-ubiquitinyl-L-cysteine + [acceptor protein]-L-lysine = [E2 ubiquitin-conjugating enzyme]-L-cysteine + [acceptor protein]-N(6)-ubiquitinyl-L-lysine.. It participates in protein modification; protein ubiquitination. Might act as an E3 ubiquitin-protein ligase, or as part of E3 complex, which accepts ubiquitin from specific E2 ubiquitin-conjugating enzymes and then transfers it to substrates. The sequence is that of Probable E3 ubiquitin-protein ligase ARI3 (ARI3) from Arabidopsis thaliana (Mouse-ear cress).